A 418-amino-acid chain; its full sequence is Gamma-glutamyl phosphate reductase (418 aa).

The protein belongs to the gamma-glutamyl phosphate reductase family.

It is found in the cytoplasm. It carries out the reaction L-glutamate 5-semialdehyde + phosphate + NADP(+) = L-glutamyl 5-phosphate + NADPH + H(+). It participates in amino-acid biosynthesis; L-proline biosynthesis; L-glutamate 5-semialdehyde from L-glutamate: step 2/2. In terms of biological role, catalyzes the NADPH-dependent reduction of L-glutamate 5-phosphate into L-glutamate 5-semialdehyde and phosphate. The product spontaneously undergoes cyclization to form 1-pyrroline-5-carboxylate. This is Gamma-glutamyl phosphate reductase from Syntrophotalea carbinolica (strain DSM 2380 / NBRC 103641 / GraBd1) (Pelobacter carbinolicus).